The sequence spans 122 residues: Large ribosomal subunit protein uL14 (122 aa).

It belongs to the universal ribosomal protein uL14 family. Part of the 50S ribosomal subunit. Forms a cluster with proteins L3 and L19. In the 70S ribosome, L14 and L19 interact and together make contacts with the 16S rRNA in bridges B5 and B8.

Its function is as follows. Binds to 23S rRNA. Forms part of two intersubunit bridges in the 70S ribosome. The sequence is that of Large ribosomal subunit protein uL14 from Leuconostoc mesenteroides subsp. mesenteroides (strain ATCC 8293 / DSM 20343 / BCRC 11652 / CCM 1803 / JCM 6124 / NCDO 523 / NBRC 100496 / NCIMB 8023 / NCTC 12954 / NRRL B-1118 / 37Y).